A 207-amino-acid polypeptide reads, in one-letter code: Ribosomal RNA small subunit methyltransferase G (207 aa).

S-adenosyl-L-methionine contacts are provided by residues Gly76, Gln81, 127–128, and Arg141; that span reads VE.

Belongs to the methyltransferase superfamily. RNA methyltransferase RsmG family.

Its subcellular location is the cytoplasm. The catalysed reaction is guanosine(527) in 16S rRNA + S-adenosyl-L-methionine = N(7)-methylguanosine(527) in 16S rRNA + S-adenosyl-L-homocysteine. Specifically methylates the N7 position of guanine in position 527 of 16S rRNA. The polypeptide is Ribosomal RNA small subunit methyltransferase G (Neisseria gonorrhoeae (strain ATCC 700825 / FA 1090)).